A 248-amino-acid chain; its full sequence is 1-(5-phosphoribosyl)-5-[(5-phosphoribosylamino)methylideneamino] imidazole-4-carboxamide isomerase (248 aa).

D11 acts as the Proton acceptor in catalysis. The Proton donor role is filled by D132.

Belongs to the HisA/HisF family.

It localises to the cytoplasm. The enzyme catalyses 1-(5-phospho-beta-D-ribosyl)-5-[(5-phospho-beta-D-ribosylamino)methylideneamino]imidazole-4-carboxamide = 5-[(5-phospho-1-deoxy-D-ribulos-1-ylimino)methylamino]-1-(5-phospho-beta-D-ribosyl)imidazole-4-carboxamide. It functions in the pathway amino-acid biosynthesis; L-histidine biosynthesis; L-histidine from 5-phospho-alpha-D-ribose 1-diphosphate: step 4/9. This is 1-(5-phosphoribosyl)-5-[(5-phosphoribosylamino)methylideneamino] imidazole-4-carboxamide isomerase from Bradyrhizobium diazoefficiens (strain JCM 10833 / BCRC 13528 / IAM 13628 / NBRC 14792 / USDA 110).